Consider the following 539-residue polypeptide: uncharacterized protein (539 aa).

2 consecutive ABC transporter domains span residues 9–276 (LEVK…EFKK) and 288–536 (IKLE…QEMF). ATP-binding positions include 41–48 (GKSGAGKS) and 325–332 (GTSGAGKT).

The protein belongs to the ABC transporter superfamily.

This is an uncharacterized protein from Methanocaldococcus jannaschii (strain ATCC 43067 / DSM 2661 / JAL-1 / JCM 10045 / NBRC 100440) (Methanococcus jannaschii).